A 330-amino-acid chain; its full sequence is D-alanine--D-alanine ligase (330 aa).

An ATP-grasp domain is found at 120-326 (KLWYDALGIP…FKTFLQKAVL (207 aa)). 150–205 (AFKQWGGLFVKAACQGSSVGCYKVTSEAELSKAINDAFGYSQQVLVEKAVKPRELE) contributes to the ATP binding site. Positions 280, 293, and 295 each coordinate Mg(2+).

This sequence belongs to the D-alanine--D-alanine ligase family. Mg(2+) serves as cofactor. Requires Mn(2+) as cofactor.

The protein localises to the cytoplasm. It carries out the reaction 2 D-alanine + ATP = D-alanyl-D-alanine + ADP + phosphate + H(+). The protein operates within cell wall biogenesis; peptidoglycan biosynthesis. Functionally, cell wall formation. The protein is D-alanine--D-alanine ligase of Aliivibrio fischeri (strain ATCC 700601 / ES114) (Vibrio fischeri).